A 255-amino-acid chain; its full sequence is 4-hydroxy-tetrahydrodipicolinate reductase (255 aa).

Residues 8 to 13 (GATGRV), 88 to 90 (GTT), and 112 to 115 (ATNM) each bind NAD(+). H144 functions as the Proton donor/acceptor in the catalytic mechanism. H145 serves as a coordination point for (S)-2,3,4,5-tetrahydrodipicolinate. The active-site Proton donor is the K148. Residue 154 to 155 (GT) coordinates (S)-2,3,4,5-tetrahydrodipicolinate.

The protein belongs to the DapB family.

It is found in the cytoplasm. It catalyses the reaction (S)-2,3,4,5-tetrahydrodipicolinate + NAD(+) + H2O = (2S,4S)-4-hydroxy-2,3,4,5-tetrahydrodipicolinate + NADH + H(+). It carries out the reaction (S)-2,3,4,5-tetrahydrodipicolinate + NADP(+) + H2O = (2S,4S)-4-hydroxy-2,3,4,5-tetrahydrodipicolinate + NADPH + H(+). It functions in the pathway amino-acid biosynthesis; L-lysine biosynthesis via DAP pathway; (S)-tetrahydrodipicolinate from L-aspartate: step 4/4. Functionally, catalyzes the conversion of 4-hydroxy-tetrahydrodipicolinate (HTPA) to tetrahydrodipicolinate. This chain is 4-hydroxy-tetrahydrodipicolinate reductase, found in Helicobacter hepaticus (strain ATCC 51449 / 3B1).